Consider the following 197-residue polypeptide: Holliday junction branch migration complex subunit RuvA (197 aa).

The domain I stretch occupies residues 1–63 (MFDYIKGQLT…EDAHLLFGFH (63 aa)). The segment at 64–142 (TENEKDVFLK…TIPEGGQAQQ (79 aa)) is domain II. The tract at residues 142 to 146 (QMPKA) is flexible linker. Positions 147-197 (KGNQQLDEAIEALLALGYKATELKKIRAFFEGTDDTAEQYIKSALKMLMKG) are domain III.

Belongs to the RuvA family. Homotetramer. Forms an RuvA(8)-RuvB(12)-Holliday junction (HJ) complex. HJ DNA is sandwiched between 2 RuvA tetramers; dsDNA enters through RuvA and exits via RuvB. An RuvB hexamer assembles on each DNA strand where it exits the tetramer. Each RuvB hexamer is contacted by two RuvA subunits (via domain III) on 2 adjacent RuvB subunits; this complex drives branch migration. In the full resolvosome a probable DNA-RuvA(4)-RuvB(12)-RuvC(2) complex forms which resolves the HJ.

The protein resides in the cytoplasm. The RuvA-RuvB-RuvC complex processes Holliday junction (HJ) DNA during genetic recombination and DNA repair, while the RuvA-RuvB complex plays an important role in the rescue of blocked DNA replication forks via replication fork reversal (RFR). RuvA specifically binds to HJ cruciform DNA, conferring on it an open structure. The RuvB hexamer acts as an ATP-dependent pump, pulling dsDNA into and through the RuvAB complex. HJ branch migration allows RuvC to scan DNA until it finds its consensus sequence, where it cleaves and resolves the cruciform DNA. This is Holliday junction branch migration complex subunit RuvA from Streptococcus uberis (strain ATCC BAA-854 / 0140J).